The sequence spans 482 residues: Chromosome stability protein 9 (482 aa).

Disordered regions lie at residues 239-263 and 418-482; these read SSLRNSSKNNNGTVTPSTSGRVNKN and SGLA…RRIR. Residues 240–249 show a composition bias toward low complexity; sequence SLRNSSKNNN. The span at 250–263 shows a compositional bias: polar residues; that stretch reads GTVTPSTSGRVNKN. Residues 418–437 show a composition bias toward low complexity; the sequence is SGLAFSSSSNSLQQSKLPKS. 2 stretches are compositionally biased toward polar residues: residues 440-453 and 463-473; these read LKRSNSTQQLTNTH and RSSNTVLGSSK.

As to quaternary structure, component of the synapsis initiation complex composed of at least ZIP2, ZIP3, MSH4 and MSH5. Also interacts with ZIP1, MRE11, RAD51 and RAD53.

It is found in the nucleus. Its subcellular location is the chromosome. In terms of biological role, component of the synapsis initiation complex (SIC) necessary for the synaptonemal complex assembly. Stabilizes the ZIP2 component to the chromosomes. The SIC complex loads onto chromosomes and nucleates ZIP1 polymerization, a molecular zipper that acts to bring homologous chromosomes in close apposition, which is required for meiotic crossover. May also be involved in double strand break repair. The polypeptide is Chromosome stability protein 9 (CST9) (Saccharomyces cerevisiae (strain ATCC 204508 / S288c) (Baker's yeast)).